A 269-amino-acid polypeptide reads, in one-letter code: MIRLQAIRRSRVEKSDGKNAYWCVVSGSDLWLVDGQIPYGSAEQWDLPQEKAILVDRYQNSPVYWLNAADIEQDRPLTSLRELLGVDEALFLAASKAVQYGHMSQTIRFCPQCGGRNYLNHQQLAMQCHDCRTLHYPRIFPCIIVAVRKQQQILLAQHPRHRNGMYTVIAGFVEVGETLEQCVAREVLEETGIVVTNIRYFGSQPWAFPSSMMMAFLADYDTGELKPDYSELSDANWFGIENLPPVAPRGTIARALIEQTLADIAQDQA.

Position 81 (Arg-81) interacts with substrate. Residues Cys-110, Cys-113, Cys-128, and Cys-131 each contribute to the Zn(2+) site. Substrate is bound at residue Tyr-136. The region spanning 137–260 (PRIFPCIIVA…TIARALIEQT (124 aa)) is the Nudix hydrolase domain. Ala-170, Glu-186, and Glu-190 together coordinate a divalent metal cation. Positions 171–192 (GFVEVGETLEQCVAREVLEETG) match the Nudix box motif. 204–211 (QPWAFPSS) contacts substrate. Glu-231 contributes to the a divalent metal cation binding site. Residue Ala-253 participates in substrate binding.

Belongs to the Nudix hydrolase family. NudC subfamily. In terms of assembly, homodimer. Requires Mg(2+) as cofactor. Mn(2+) serves as cofactor. The cofactor is Zn(2+).

The enzyme catalyses a 5'-end NAD(+)-phospho-ribonucleoside in mRNA + H2O = a 5'-end phospho-adenosine-phospho-ribonucleoside in mRNA + beta-nicotinamide D-ribonucleotide + 2 H(+). The catalysed reaction is NAD(+) + H2O = beta-nicotinamide D-ribonucleotide + AMP + 2 H(+). It catalyses the reaction NADH + H2O = reduced beta-nicotinamide D-ribonucleotide + AMP + 2 H(+). In terms of biological role, mRNA decapping enzyme that specifically removes the nicotinamide adenine dinucleotide (NAD) cap from a subset of mRNAs by hydrolyzing the diphosphate linkage to produce nicotinamide mononucleotide (NMN) and 5' monophosphate mRNA. The NAD-cap is present at the 5'-end of some mRNAs and stabilizes RNA against 5'-processing. Has preference for mRNAs with a 5'-end purine. Catalyzes the hydrolysis of a broad range of dinucleotide pyrophosphates. This is NAD-capped RNA hydrolase NudC from Vibrio cholerae serotype O1 (strain ATCC 39315 / El Tor Inaba N16961).